The following is a 250-amino-acid chain: 3alpha-hydroxysteroid dehydrogenase (250 aa).

NADP(+) is bound by residues N93, Y158, and K162. Y158 functions as the Proton acceptor in the catalytic mechanism.

It belongs to the short-chain dehydrogenases/reductases (SDR) family.

The enzyme catalyses lithocholate + NADP(+) = 3-oxo-5beta-cholan-24-oate + NADPH + H(+). It carries out the reaction deoxycholate + NADP(+) = 12alpha-hydroxy-3-oxo-5beta-cholan-24-oate + NADPH + H(+). It catalyses the reaction deoxycholate + NAD(+) = 12alpha-hydroxy-3-oxo-5beta-cholan-24-oate + NADH + H(+). The catalysed reaction is cholate + NADP(+) = 7alpha,12alpha-dihydroxy-3-oxo-5beta-cholan-24-oate + NADPH + H(+). The enzyme catalyses chenodeoxycholate + NADP(+) = 3-oxochenodeoxycholate + NADPH + H(+). In terms of biological role, involved in the modification of secondary bile acids into iso-bile acids (3beta-bile acids) via epimerization of the 3-OH group through a 3-oxo-intermediate. Catalyzes the oxidation of deoxycholate (DCA) and lithocholate (LCA) to yield 12-alpha-hydroxy-3-oxo-5-beta-cholan-24-oate (3-oxo-DCA) and 3-oxo-5-beta-cholan-24-oate (3-oxo-LCA), respectively. Is also able to catalyze the oxidation of cholate (CA) and chenodeoxycholate (CDCA) into 3-dehydrocholate (3-oxo-CA) and 7-alpha-hydroxy-3-oxo-5-beta-cholan-24-oate (3-oxo-CDCA), respectively. Can also catalyze the reverse reactions in vitro. Accepts both NADPH and NADH as cosubstrates. The conversion of the abundant bile acid DCA into isoDCA by the gut bacterium R.gnavus favors the growth of the keystone commensal genus Bacteroides, since isoDCA is less cytotoxic than its parent compound, DCA; iso-bile acids have thus a potential role in modulating gut community composition. In Mediterraneibacter gnavus (strain ATCC 29149 / DSM 114966 / JCM 6515 / VPI C7-9) (Ruminococcus gnavus), this protein is 3alpha-hydroxysteroid dehydrogenase.